The following is a 301-amino-acid chain: ATP synthase gamma chain (301 aa).

It belongs to the ATPase gamma chain family. As to quaternary structure, F-type ATPases have 2 components, CF(1) - the catalytic core - and CF(0) - the membrane proton channel. CF(1) has five subunits: alpha(3), beta(3), gamma(1), delta(1), epsilon(1). CF(0) has three main subunits: a, b and c.

Its subcellular location is the cell inner membrane. Its function is as follows. Produces ATP from ADP in the presence of a proton gradient across the membrane. The gamma chain is believed to be important in regulating ATPase activity and the flow of protons through the CF(0) complex. The polypeptide is ATP synthase gamma chain (Bordetella pertussis (strain Tohama I / ATCC BAA-589 / NCTC 13251)).